The primary structure comprises 75 residues: Large ribosomal subunit protein bL31 (75 aa).

Belongs to the bacterial ribosomal protein bL31 family. Type A subfamily. In terms of assembly, part of the 50S ribosomal subunit.

Binds the 23S rRNA. The protein is Large ribosomal subunit protein bL31 of Bradyrhizobium sp. (strain BTAi1 / ATCC BAA-1182).